The sequence spans 301 residues: MQAVKVFEVGPRDGLQNERQPLSVAARVGLIGELAGTGLRHIEAGAFVSPRWVPQMAGSDEVLRQLPSNDGVSYTALVPNRQGFEAAQRAGCREVAVFAAASEAFSRNNINCSIDESFERFTPVLRAANEASIRVRGYVSCVLGCPFSGAVAPEAVAKVARRLYELGCYEISLGDTIGAGRPDETAQLFELCARQLPVAALAGHFHDTWGMAIANVHAALAQGVRTFDSSVAGLGGCPYSPGASGNVATEDLLYLLHGLGYSTGVDLEAVAQVGVRISAQLGTANRSRAGLALAARSAREH.

The region spanning 4–271 (VKVFEVGPRD…STGVDLEAVA (268 aa)) is the Pyruvate carboxyltransferase domain. Arg-12 is a binding site for substrate. Residues Asp-13, His-204, and His-206 each contribute to the a divalent metal cation site. Residue Cys-237 is part of the active site. Asn-246 is a binding site for a divalent metal cation.

The protein belongs to the HMG-CoA lyase family.

The catalysed reaction is (3S)-3-hydroxy-3-methylglutaryl-CoA = acetoacetate + acetyl-CoA. It participates in metabolic intermediate metabolism; (S)-3-hydroxy-3-methylglutaryl-CoA degradation; acetoacetate from (S)-3-hydroxy-3-methylglutaryl-CoA: step 1/1. Functionally, involved in the catabolism of branched amino acids such as leucine. The sequence is that of Hydroxymethylglutaryl-CoA lyase (mvaB) from Pseudomonas mevalonii.